The following is an 869-amino-acid chain: Ribonucleoside-diphosphate reductase large chain 2 (869 aa).

An ATP-cone domain is found at 1 to 92; that stretch reads MYVIKRDGRK…ISNLHKQTTK (92 aa). Residues 5–6, 11–17, Thr-53, and Asp-57 each bind ATP; these read KR and EPVQFDK. Residues Ser-202 and Ser-217 each contribute to the GDP site. The cysteines at positions 218 and 443 are disulfide-linked. DTTP is bound by residues 226–228, Lys-243, Arg-256, and 263–264; these read DSI and AG. Phosphoserine is present on Ser-227. Lys-387 is covalently cross-linked (Glycyl lysine isopeptide (Lys-Gly) (interchain with G-Cter in ubiquitin)). Asn-426 serves as a coordination point for GDP. Asn-426 serves as the catalytic Proton acceptor. The active-site Cysteine radical intermediate is Cys-428. Residues Glu-430 and 608 to 611 contribute to the GDP site; that span reads TAST. The active-site Proton acceptor is the Glu-430. A disordered region spans residues 793–843; the sequence is SALTESSDNEKDASPVPSEQSSVSSAMSNVKLEDSVAPAVPTETIKEDSDE. Phosphoserine is present on residues Ser-806, Ser-827, and Ser-868. Over residues 806-820 the composition is skewed to low complexity; it reads SPVPSEQSSVSSAMS.

Belongs to the ribonucleoside diphosphate reductase large chain family. In terms of assembly, heterotetramer of two large (R1) and two small (R2) subunits. S.cerevisiae has two different R1 subunits (RNR1 and RNR3) and two different R2 subunits (RNR2 and RNR4). The functional form of the small subunits is a RNR2-RNR4 heterodimer, where RNR2 provides the iron-radical center and RNR4 is required for proper folding of RNR2 and assembly with the large subunits. Under normal growth conditions, the active form of the large subunits is a homodimer of the constitutively expressed RNR1. In damaged cells or cells arrested for DNA synthesis, the reductase consists of multiple species because of the association of the small subunits (RNR2-RNR4) with either the RNR1 homodimer or a heterodimer of RNR1 and the damage-inducible RNR3.

The protein resides in the cytoplasm. It catalyses the reaction a 2'-deoxyribonucleoside 5'-diphosphate + [thioredoxin]-disulfide + H2O = a ribonucleoside 5'-diphosphate + [thioredoxin]-dithiol. With respect to regulation, under complex allosteric control mediated by deoxynucleoside triphosphates and ATP binding to separate specificity and activation sites on the large subunit. The type of nucleotide bound at the specificity site determines substrate preference. It seems probable that ATP makes the enzyme reduce CDP and UDP, dGTP favors ADP reduction and dTTP favors GDP reduction. Stimulated by ATP and inhibited by dATP binding to the activity site. In terms of biological role, provides the precursors necessary for DNA synthesis. Catalyzes the biosynthesis of deoxyribonucleotides from the corresponding ribonucleotides. This chain is Ribonucleoside-diphosphate reductase large chain 2 (RNR3), found in Saccharomyces cerevisiae (strain ATCC 204508 / S288c) (Baker's yeast).